Reading from the N-terminus, the 716-residue chain is Fatty acid oxidation complex subunit alpha (716 aa).

An enoyl-CoA hydratase/isomerase region spans residues 1–189; the sequence is MIYQSPTIQV…KVGAVDAVVA (189 aa). Asp296 lines the substrate pocket. Positions 311–716 are 3-hydroxyacyl-CoA dehydrogenase; it reads KEVNNAAVLG…AANNGSYYQA (406 aa). NAD(+) is bound by residues Met324, Asp343, 400–402, Lys407, and Ser429; that span reads VVE. His450 acts as the For 3-hydroxyacyl-CoA dehydrogenase activity in catalysis. An NAD(+)-binding site is contributed by Asn453. Substrate contacts are provided by Asn500 and Tyr660.

The protein in the N-terminal section; belongs to the enoyl-CoA hydratase/isomerase family. This sequence in the C-terminal section; belongs to the 3-hydroxyacyl-CoA dehydrogenase family. In terms of assembly, heterotetramer of two alpha chains (FadB) and two beta chains (FadA).

The enzyme catalyses a (3S)-3-hydroxyacyl-CoA + NAD(+) = a 3-oxoacyl-CoA + NADH + H(+). The catalysed reaction is a (3S)-3-hydroxyacyl-CoA = a (2E)-enoyl-CoA + H2O. It catalyses the reaction a 4-saturated-(3S)-3-hydroxyacyl-CoA = a (3E)-enoyl-CoA + H2O. It carries out the reaction (3S)-3-hydroxybutanoyl-CoA = (3R)-3-hydroxybutanoyl-CoA. The enzyme catalyses a (3Z)-enoyl-CoA = a 4-saturated (2E)-enoyl-CoA. The catalysed reaction is a (3E)-enoyl-CoA = a 4-saturated (2E)-enoyl-CoA. The protein operates within lipid metabolism; fatty acid beta-oxidation. Involved in the aerobic and anaerobic degradation of long-chain fatty acids via beta-oxidation cycle. Catalyzes the formation of 3-oxoacyl-CoA from enoyl-CoA via L-3-hydroxyacyl-CoA. It can also use D-3-hydroxyacyl-CoA and cis-3-enoyl-CoA as substrate. In Shewanella baltica (strain OS195), this protein is Fatty acid oxidation complex subunit alpha.